The following is a 337-amino-acid chain: Phosphate acyltransferase (337 aa).

It belongs to the PlsX family. Homodimer. Probably interacts with PlsY.

Its subcellular location is the cytoplasm. It catalyses the reaction a fatty acyl-[ACP] + phosphate = an acyl phosphate + holo-[ACP]. It functions in the pathway lipid metabolism; phospholipid metabolism. In terms of biological role, catalyzes the reversible formation of acyl-phosphate (acyl-PO(4)) from acyl-[acyl-carrier-protein] (acyl-ACP). This enzyme utilizes acyl-ACP as fatty acyl donor, but not acyl-CoA. The chain is Phosphate acyltransferase from Acidobacterium capsulatum (strain ATCC 51196 / DSM 11244 / BCRC 80197 / JCM 7670 / NBRC 15755 / NCIMB 13165 / 161).